The following is a 533-amino-acid chain: Subtilisin-like protease 1 (533 aa).

Residues 1–19 (MGVFRFISISLAAVSAANA) form the signal peptide. Residues 20 to 116 (AQILSMPHAQ…VEPDTIISVH (97 aa)) constitute a propeptide that is removed on maturation. One can recognise an Inhibitor I9 domain in the interval 34–115 (SYIVMMKDDT…FVEPDTIISV (82 aa)). The region spanning 126–400 (SWGLARISNP…NVLINNGGAK (275 aa)) is the Peptidase S8 domain. Active-site charge relay system residues include Asp-158 and His-190. The disordered stretch occupies residues 175-198 (GSNQVNDGDDRDGSGHGTHTSGTM). N-linked (GlcNAc...) asparagine glycans are attached at residues Asn-233 and Asn-251. The segment covering 282-294 (NDNQDAQSSSPAS) has biased composition (polar residues). The tract at residues 282–312 (NDNQDAQSSSPASEPSVCTVGSSAEDDSRSS) is disordered. The active-site Charge relay system is the Ser-345. Residues 378-394 (TSSITDAGPGTPTNVLI) are compositionally biased toward polar residues. The interval 378-512 (TSSITDAGPG…YPGGDNFDFD (135 aa)) is disordered. Over residues 405–470 (NPNPAPSPSP…FPGEPFPGEP (66 aa)) the composition is skewed to pro residues. Residues 471–487 (FPGESFPGESFPGESAP) are compositionally biased toward low complexity. The segment covering 488–502 (APAPMPPSPQHPHTP) has biased composition (pro residues).

This sequence belongs to the peptidase S8 family.

The protein resides in the secreted. In terms of biological role, secreted subtilisin-like serine protease with keratinolytic activity that contributes to pathogenicity. This Arthroderma benhamiae (strain ATCC MYA-4681 / CBS 112371) (Trichophyton mentagrophytes) protein is Subtilisin-like protease 1 (SUB1).